The sequence spans 250 residues: GTP cyclohydrolase 1 type 2 homolog (250 aa).

A divalent metal cation is bound by residues H63, H64, D100, H218, and E222.

It belongs to the GTP cyclohydrolase I type 2/NIF3 family. As to quaternary structure, homohexamer.

The chain is GTP cyclohydrolase 1 type 2 homolog from Pyrococcus horikoshii (strain ATCC 700860 / DSM 12428 / JCM 9974 / NBRC 100139 / OT-3).